A 359-amino-acid chain; its full sequence is Acyl-CoA desaturase 3 (359 aa).

Residues 1–34 (MPGHLLQEEMTPSYTTTTTITAPPSGSLQNGREK) are disordered. At 1–72 (MPGHLLQEEM…EGPPPKLEYV (72 aa)) the chain is on the cytoplasmic side. Residues 11–27 (TPSYTTTTTITAPPSGS) show a composition bias toward low complexity. The chain crosses the membrane as a helical span at residues 73-93 (WRNIILMALLHVGALYGITLV). Substrate is bound at residue Asn75. The Lumenal portion of the chain corresponds to 94 to 97 (PSCK). The chain crosses the membrane as a helical span at residues 98–118 (LYTCLFAFVYYVISIEGIGAG). The Cytoplasmic portion of the chain corresponds to 119–217 (VHRLWSHRTY…EKLVMFQRRY (99 aa)). The Fe cation site is built by His120 and His125. Positions 120–125 (HRLWSH) match the Histidine box-1 motif. Residues Asn148, Arg155, and Asp156 each contribute to the substrate site. Fe cation-binding residues include His157, His160, and His161. Residues 157–161 (HRAHH) carry the Histidine box-2 motif. Residues Arg188 and Lys189 each coordinate substrate. Position 203 is a phosphoserine (Ser203). Residues 218-237 (YKPGILLMCFILPTLVPWYC) form a helical membrane-spanning segment. Over 238-241 (WGET) the chain is Lumenal. Residues 242-263 (FLNSFYVATLLRYAVVLNATWL) traverse the membrane as a helical segment. Position 262 (Trp262) interacts with substrate. Residues 264–359 (VNSAAHLYGY…RTGDGSHKSG (96 aa)) lie on the Cytoplasmic side of the membrane. 4 residues coordinate Fe cation: His269, His298, His301, and His302. A Histidine box-3 motif is present at residues 298–302 (HNYHH).

It belongs to the fatty acid desaturase type 1 family. Requires Fe(2+) as cofactor. As to expression, detected in skin, but at lower levels compared to Scd1. Detected in the middlle part of the sebaceous gland, but not in hair follicle. Not detected in liver and brain.

Its subcellular location is the endoplasmic reticulum membrane. The protein resides in the microsome membrane. It carries out the reaction hexadecanoyl-CoA + 2 Fe(II)-[cytochrome b5] + O2 + 2 H(+) = (9Z)-hexadecenoyl-CoA + 2 Fe(III)-[cytochrome b5] + 2 H2O. Functionally, stearoyl-CoA desaturase that utilizes O(2) and electrons from reduced cytochrome b5 to introduce the first double bond into saturated fatty acyl-CoA substrates. Catalyzes the insertion of a cis double bond at the delta-9 position into fatty acyl-CoA substrates including palmitoyl-CoA. Has a strong preference for saturated fatty acids with chain lengths of 14 or 16 carbon atoms (C14:0 and C16:0), and has only very low activity with stearatate (C18:0). Required for the biosynthesis of membrane phospholipids, cholesterol esters and triglycerides. The protein is Acyl-CoA desaturase 3 of Mus musculus (Mouse).